A 356-amino-acid chain; its full sequence is Pavine N-methyltransferase (356 aa).

S-adenosyl-L-homocysteine is bound by residues Phe96, Ser97, Gly135, Asn159, Gln163, Asp185, Val186, and Val201. Phe96, Ser97, Gly135, Asn159, Gln163, Asp185, Val186, and Val201 together coordinate S-adenosyl-L-methionine. Glu205 is a (S)-tetrahydropapaverine binding site. Cys331 is a catalytic residue.

This sequence belongs to the CFA/CMAS family. Homodimer.

The protein resides in the cytoplasm. It carries out the reaction (+-)-pavine + S-adenosyl-L-methionine = N-methylpavine + S-adenosyl-L-homocysteine + H(+). The enzyme catalyses (S)-reticuline + S-adenosyl-L-methionine = (S)-tembetarine + S-adenosyl-L-homocysteine + H(+). The catalysed reaction is (S)-stylopine + S-adenosyl-L-methionine = (S)-cis-N-methylstylopine + S-adenosyl-L-homocysteine. It catalyses the reaction (S)-scoulerine + S-adenosyl-L-methionine = (S)-cis-N-methylscoulerine + S-adenosyl-L-homocysteine. It carries out the reaction (S)-tetrahydropapaverine + S-adenosyl-L-methionine = (S)-N-methyltetrahydropapaverine + S-adenosyl-L-homocysteine + H(+). The enzyme catalyses (S)-tetrahydropalmatine + S-adenosyl-L-methionine = (S)-cis-N-methyltetrahydropalmatine + S-adenosyl-L-homocysteine. It functions in the pathway alkaloid biosynthesis. With respect to regulation, in the presence of a racemic mixture of tetrahydropapaverine (THP), one molecule of (S)-THP binds in a productive mode, while one molecule of (R)-THP is bound next to it in a non-productive mode. The (R)-THP seems to inhibit the release of products from the enzyme when higher concentrations of the racemic substrate are added to the reaction. Its function is as follows. N-methyltransferase with a substrate preference for (+-)-pavine and (S)-reticuline, but also active with the protoberberines scoulerine and stylopine and, to a lesser extent, tetrahydropapaverine (THP) and tetrahydropalmatine. Is not active on (R)-reticuline, cryptopine, glaucine, codeine, canadaline, noscapine and berbamine. The protein is Pavine N-methyltransferase of Thalictrum flavum subsp. glaucum (Yellow meadow rue).